Consider the following 949-residue polypeptide: Translation initiation factor IF-2 (949 aa).

Disordered regions lie at residues 61 to 122, 139 to 159, and 171 to 284; these read IQAN…PIIK, VENT…QKLQ, and LTQS…NKSH. 2 stretches are compositionally biased toward basic and acidic residues: residues 112-122 and 150-159; these read KKKEAPAPIIK and QIEKAKQKLQ. The segment covering 174–190 has biased composition (low complexity); the sequence is SNTNTTNNANSASNVSN. The segment covering 191–208 has biased composition (basic and acidic residues); sequence AKKEISEVKKQEQEIKRH. Positions 209-220 are enriched in basic residues; sequence ENIKRRTGFRVI. The span at 249-264 shows a compositional bias: basic and acidic residues; that stretch reads EDIKKEWQEKDKQETK. The tr-type G domain occupies 448–617; sequence ERPPVVTIMG…LIQADIMELK (170 aa). The interval 457-464 is G1; the sequence is GHVDHGKT. 457–464 lines the GTP pocket; the sequence is GHVDHGKT. The interval 482–486 is G2; that stretch reads GITQH. Residues 503-506 form a G3 region; that stretch reads DTPG. Residues 503-507 and 557-560 contribute to the GTP site; these read DTPGH and NKMD. Residues 557-560 form a G4 region; that stretch reads NKMD. Residues 593–595 are G5; the sequence is SAK.

This sequence belongs to the TRAFAC class translation factor GTPase superfamily. Classic translation factor GTPase family. IF-2 subfamily.

The protein resides in the cytoplasm. Functionally, one of the essential components for the initiation of protein synthesis. Protects formylmethionyl-tRNA from spontaneous hydrolysis and promotes its binding to the 30S ribosomal subunits. Also involved in the hydrolysis of GTP during the formation of the 70S ribosomal complex. This is Translation initiation factor IF-2 (infB) from Helicobacter pylori (strain J99 / ATCC 700824) (Campylobacter pylori J99).